Reading from the N-terminus, the 166-residue chain is Endoribonuclease YbeY (166 aa).

The Zn(2+) site is built by His-130, His-134, and His-140.

Belongs to the endoribonuclease YbeY family. The cofactor is Zn(2+).

The protein localises to the cytoplasm. Its function is as follows. Single strand-specific metallo-endoribonuclease involved in late-stage 70S ribosome quality control and in maturation of the 3' terminus of the 16S rRNA. The chain is Endoribonuclease YbeY from Streptococcus uberis (strain ATCC BAA-854 / 0140J).